We begin with the raw amino-acid sequence, 441 residues long: tRNA modification GTPase MnmE (441 aa).

Residues R21, E79, and K118 each contribute to the (6S)-5-formyl-5,6,7,8-tetrahydrofolate site. One can recognise a TrmE-type G domain in the interval 214–370 (GFKIAIVGKP…LEGYLKTQDT (157 aa)). Residues 224-229 (NVGKSS), 243-249 (SDEAGTT), and 268-271 (DTAG) contribute to the GTP site. Residues S228 and T249 each coordinate Mg(2+). K441 is a (6S)-5-formyl-5,6,7,8-tetrahydrofolate binding site.

The protein belongs to the TRAFAC class TrmE-Era-EngA-EngB-Septin-like GTPase superfamily. TrmE GTPase family. In terms of assembly, homodimer. Heterotetramer of two MnmE and two MnmG subunits. Requires K(+) as cofactor.

Its subcellular location is the cytoplasm. Exhibits a very high intrinsic GTPase hydrolysis rate. Involved in the addition of a carboxymethylaminomethyl (cmnm) group at the wobble position (U34) of certain tRNAs, forming tRNA-cmnm(5)s(2)U34. The polypeptide is tRNA modification GTPase MnmE (Campylobacter concisus (strain 13826)).